A 445-amino-acid polypeptide reads, in one-letter code: Cryptochrome DASH (445 aa).

Residues 4 to 137 (KIGLYWFTFD…VIVQHSVRSL (134 aa)) enclose the Photolyase/cryptochrome alpha/beta domain.

Belongs to the DNA photolyase class-1 family. It depends on FAD as a cofactor. (6R)-5,10-methylene-5,6,7,8-tetrahydrofolate serves as cofactor.

May have a photoreceptor function. Binds DNA; probably functions as a transcriptional repressor. The chain is Cryptochrome DASH (cry) from Vibrio parahaemolyticus serotype O3:K6 (strain RIMD 2210633).